The following is a 34-amino-acid chain: Potassium channel toxin alpha-KTx 6 hetlaxin (34 aa).

4 disulfide bridges follow: Cys3–Cys24, Cys9–Cys29, Cys13–Cys31, and Cys19–Cys34. A Cysteine amide modification is found at Cys34.

Contains 4 disulfide bonds. Expressed by the venom gland.

The protein resides in the secreted. Functionally, binds to voltage-gated potassium channels Kv1.3/KCNA3 (IC(50)=0.48 uM) and Kv1.1/KCNA1 (IC(50)=6.7 uM) and inhibits channel activity. This chain is Potassium channel toxin alpha-KTx 6 hetlaxin, found in Heterometrus laoticus (Thai giant scorpion).